The sequence spans 175 residues: Cuticle protein 16.5, isoform A (175 aa).

19 tandem repeats follow at residues 17 to 20 (AAPA), 25 to 28 (AAPA), 31 to 34 (AAPA), 38 to 41 (AAPA), 44 to 47 (AAPA), 51 to 54 (AAPA), 57 to 60 (AAPA), 64 to 67 (AAPA), 70 to 73 (AAPA), 77 to 80 (AAPA), 83 to 86 (AAPA), 91 to 94 (AAPA), 99 to 102 (AAPA), 106 to 109 (AAPA), 134 to 137 (AAPA), 144 to 147 (AAPA), 151 to 154 (AAPA), 158 to 161 (AAPA), and 165 to 168 (AAPA).

In terms of biological role, component of the cuticle of migratory locust which contains more than 100 different structural proteins. In Locusta migratoria (Migratory locust), this protein is Cuticle protein 16.5, isoform A.